The following is a 72-amino-acid chain: Mitochondrial import protein 2 (72 aa).

Residues 1–22 (MAEVLDLEIDPISDGEDDTYSS) form a disordered region. Topologically, residues 1–34 (MAEVLDLEIDPISDGEDDTYSSELDDDLKDSIEQ) are cytoplasmic. Residues 35–52 (LERVLCLVVFPLLGKFLG) traverse the membrane as a helical segment. Topologically, residues 53-72 (RKFAFHAWARWLERRRLVSN) are mitochondrial intermembrane.

This sequence belongs to the MIM2 family. In terms of assembly, component of the mitochondrial outer import machinery (MIM) complex containing at least mim1 and mim2. Interacts with mim1. Interacts with mitophagy receptor atg43.

The protein resides in the mitochondrion outer membrane. Functionally, component of the mitochondrial outer import machinery (MIM) complex that mediates transport of proteins into mitochondrial compartments. Promotes the insertion of tom70 into the outer mitochondrial membrane. Promotes the insertion of atg43 into the outer mitochondrial membrane. Involved in import of the subset of proteins with multiple alpha-helical transmembrane segments. The protein is Mitochondrial import protein 2 of Schizosaccharomyces pombe (strain 972 / ATCC 24843) (Fission yeast).